A 639-amino-acid polypeptide reads, in one-letter code: MAKRVSILDQHKKPSSARVRVAVRLRPYMEKEDEKAPAACVRGLDSQSLEIVNWRNQLETMQYQFDAFYGDSATQREIYMGSVCHILPHLLIGQNASVFAYGPTGAGKTHTMLGNPSQPGVIPRAVRDLLQMTRTAAGGPENENWTYTITMSYVEIYQEKVMDLLEPKNKDLPIREDKDHNILIPGVTQKTINSFGDFDEHFIPASQNRTVASTKLNDRSSRSHAVLLIKVQKSQQVSPFRQLTGKLYLIDLAGSEDNRRTGNQGIRLKESGAINSSLFTLSKVVDALNQGLPRIPYRDSKLTRLLQDSLGGTAHSVMIANIAPEQKYYFDTLTALNFAAKSKQIINKPFSQETTQSIAALPAMKRPREEAETAAGSRQRKKSKTDSTESSPNTSMDAASKRKLNLAALDPAVVERLLKLDKILTEKGMKEAQLLSTPKRERMALLKKWEESQMEIERLKEKQKELEQKAIEAEARLEKSTNSDCNLSDSSVSECTFRAPLRGRNTSTAKAKKVLRVLPMQGNSQLQSTIEEGIPVFEKKKKKPVSCDGRENQPTWEVNVRTDLLESGRERILKLLNTGSVKELKSLQKIGDKKAKLIIGWREVNGPFKNVEDLASLEGISAKQVTSFIKANILSIIAS.

The 328-residue stretch at Arg18–Ile345 folds into the Kinesin motor domain. An ATP-binding site is contributed by Gly102–Thr109. A disordered region spans residues Ile358–Ser400. Residues Thr388–Asp397 show a composition bias toward polar residues. The stretch at Lys439–Asp484 forms a coiled coil. The short motif at Gly549–Asn552 is the Important for regulated proteolytic degradation element.

It belongs to the TRAFAC class myosin-kinesin ATPase superfamily. Kinesin family. Ubiquitinated, leading to its subsequent proteasomal degradation.

The protein localises to the nucleus. It localises to the cytoplasm. The protein resides in the cytoskeleton. Functionally, kinesin family member that is involved in spindle formation and the movements of chromosomes during mitosis and meiosis. Binds to microtubules and to DNA. The protein is Kinesin-like protein KIF22 (kif22) of Xenopus tropicalis (Western clawed frog).